The sequence spans 437 residues: Carbonic anhydrase 9 (437 aa).

The signal sequence occupies residues 1–31 (MASLGPSPWAPLSTPAPTAQLLLFLLLQVSA). A proteoglycan-like (PG) region spans residues 32-95 (QPQGLSGMQG…RMEESLGLED (64 aa)). Topologically, residues 32–390 (QPQGLSGMQG…HVNSCFTAGD (359 aa)) are extracellular. The interval 34–118 (QGLSGMQGEP…HGDEKGGGHS (85 aa)) is disordered. A compositionally biased stretch (acidic residues) spans 50–79 (SGEDELGVDVLPSEEDAPEEADPPDGEDPP). Residues 96–390 (LSTPEAPEHS…HVNSCFTAGD (295 aa)) are catalytic. The O-linked (GlcNAc...) threonine glycan is linked to Thr98. The Alpha-carbonic anhydrase domain occupies 118-369 (SHWSYGGTLL…LNGRTIEASF (252 aa)). Residues Cys135 and Cys315 are joined by a disulfide bond. Residue His179 is the Proton donor/acceptor of the active site. Positions 205, 207, and 230 each coordinate Zn(2+). 311 to 312 (TT) contacts substrate. N-linked (GlcNAc...) asparagine glycosylation occurs at Asn325. A helical membrane pass occupies residues 391 to 411 (ILALVFGLLFAVTSIAFLLQL). Residues 412-437 (RRQHRHRSGTKDRVSYSPAEMTETGA) are Cytoplasmic-facing. Position 427 is a phosphotyrosine (Tyr427).

The protein belongs to the alpha-carbonic anhydrase family. Forms oligomers linked by disulfide bonds. Requires Zn(2+) as cofactor. Asn-325 bears high-mannose type glycan structures.

It is found in the nucleus. Its subcellular location is the nucleolus. It localises to the cell membrane. The protein localises to the cell projection. The protein resides in the microvillus membrane. The enzyme catalyses hydrogencarbonate + H(+) = CO2 + H2O. With respect to regulation, inhibited by acetazolamide. Catalyzes the interconversion between carbon dioxide and water and the dissociated ions of carbonic acid (i.e. bicarbonate and hydrogen ions). In Mus musculus (Mouse), this protein is Carbonic anhydrase 9 (Ca9).